A 123-amino-acid polypeptide reads, in one-letter code: uncharacterized protein (123 aa).

This is an uncharacterized protein from Acanthamoeba polyphaga mimivirus (APMV).